The primary structure comprises 177 residues: ATP synthase subunit delta (177 aa).

This sequence belongs to the ATPase delta chain family. As to quaternary structure, F-type ATPases have 2 components, F(1) - the catalytic core - and F(0) - the membrane proton channel. F(1) has five subunits: alpha(3), beta(3), gamma(1), delta(1), epsilon(1). F(0) has three main subunits: a(1), b(2) and c(10-14). The alpha and beta chains form an alternating ring which encloses part of the gamma chain. F(1) is attached to F(0) by a central stalk formed by the gamma and epsilon chains, while a peripheral stalk is formed by the delta and b chains.

It localises to the cell inner membrane. Functionally, f(1)F(0) ATP synthase produces ATP from ADP in the presence of a proton or sodium gradient. F-type ATPases consist of two structural domains, F(1) containing the extramembraneous catalytic core and F(0) containing the membrane proton channel, linked together by a central stalk and a peripheral stalk. During catalysis, ATP synthesis in the catalytic domain of F(1) is coupled via a rotary mechanism of the central stalk subunits to proton translocation. This protein is part of the stalk that links CF(0) to CF(1). It either transmits conformational changes from CF(0) to CF(1) or is implicated in proton conduction. This is ATP synthase subunit delta from Shewanella denitrificans (strain OS217 / ATCC BAA-1090 / DSM 15013).